Here is a 634-residue protein sequence, read N- to C-terminus: tRNA uridine 5-carboxymethylaminomethyl modification enzyme MnmG (634 aa).

Residue 14–19 (GGGHAG) participates in FAD binding. 279-293 (GPRYCPSIEDKVVRF) serves as a coordination point for NAD(+).

The protein belongs to the MnmG family. Homodimer. Heterotetramer of two MnmE and two MnmG subunits. Requires FAD as cofactor.

It localises to the cytoplasm. NAD-binding protein involved in the addition of a carboxymethylaminomethyl (cmnm) group at the wobble position (U34) of certain tRNAs, forming tRNA-cmnm(5)s(2)U34. This Xanthomonas euvesicatoria pv. vesicatoria (strain 85-10) (Xanthomonas campestris pv. vesicatoria) protein is tRNA uridine 5-carboxymethylaminomethyl modification enzyme MnmG.